The sequence spans 479 residues: MSFTLAIVGRPNVGKSTLFNRLVGRKLALVDDQPGVTRDLREGAARLADLRFTVIDTAGLEDANDDSLEGRMRRLTERAVSMADATLFVMDARAGVTTNDLVFADILRKSGRPVVLAANKAEGNAGQSGLLDAYSLGLGEPLALSAEHGEGMADLVQVLRPMIEAAASAEEAETDVDVEGEDRVITHSKPLQIAVVGRPNAGKSTLINQIIGEDRLLTGPEAGITRDAIGLTFEWDDVPMRIFDTAGMRKRAKVQEKLEKLSVSDGLRAVKFAEVVVVLLDAAIPFESQDLRIADLAEREGRAVVIAVNKWDVEPEKQQKLKDLRVGLERLLPQLRGAPLVTVSAKTGKGLDKLHAAIMKIHATWNTRISTARLNQWLAAMIEAHPPPAPGGRRIKLRYMTQAKTRPPGFVVMCSHPQNLPEAYSRYLVNGLRQDFDMPGTPIRLWMRSQADDNPYKNRKKSTPSRLNKHVRKGETKKG.

2 EngA-type G domains span residues 3 to 167 (FTLA…EAAA) and 191 to 366 (LQIA…ATWN). GTP is bound by residues 9–16 (GRPNVGKS), 56–60 (DTAGL), 119–122 (NKAE), 197–204 (GRPNAGKS), 244–248 (DTAGM), and 309–312 (NKWD). The KH-like domain occupies 367 to 453 (TRISTARLNQ…RLWMRSQADD (87 aa)). The disordered stretch occupies residues 449-479 (SQADDNPYKNRKKSTPSRLNKHVRKGETKKG). The segment covering 457-472 (KNRKKSTPSRLNKHVR) has biased composition (basic residues).

Belongs to the TRAFAC class TrmE-Era-EngA-EngB-Septin-like GTPase superfamily. EngA (Der) GTPase family. Associates with the 50S ribosomal subunit.

Its function is as follows. GTPase that plays an essential role in the late steps of ribosome biogenesis. The sequence is that of GTPase Der from Jannaschia sp. (strain CCS1).